The following is a 323-amino-acid chain: MESFPIINLEKLNGEERAITMEKIKDACENWGFFECVNHGISLELLDKVEKMTKEHYKKCMEERFKESIKNRGLDSLRSEVNDVDWESTFYLKHLPVSNISDVPDLDDDYRTLMKDFAGKIEKLSEELLDLLCENLGLEKGYLKKVFYGSKRPTFGTKVSNYPPCPNPDLVKGLRAHTDAGGIILLFQDDKVSGLQLLKDGEWVDVPPVKHSIVVNLGDQLEVITNGKYKSVEHRVLSQTDGEGRMSIASFYNPGSDSVIFPAPELIGKEAEKEKKENYPRFVFEDYMKLYSAVKFQAKEPRFEAMKAMETTVANNVGPLATA.

An N-acetylmethionine modification is found at Met1. The 102-residue stretch at 153-254 folds into the Fe2OG dioxygenase domain; sequence PTFGTKVSNY…RMSIASFYNP (102 aa). Fe cation contacts are provided by His177, Asp179, and His234. Arg245 contacts 2-oxoglutarate.

The protein belongs to the iron/ascorbate-dependent oxidoreductase family. It depends on Fe cation as a cofactor. In terms of tissue distribution, expressed in vegetative tissues. Expressed constitutively at a low level in leaves and blades.

It carries out the reaction 1-aminocyclopropane-1-carboxylate + L-ascorbate + O2 = ethene + L-dehydroascorbate + hydrogen cyanide + CO2 + 2 H2O. The protein operates within alkene biosynthesis; ethylene biosynthesis via S-adenosyl-L-methionine; ethylene from S-adenosyl-L-methionine: step 2/2. Its function is as follows. Enzyme involved in the ethylene biosynthesis. May promote stem elongation by maximizing the extensibility cells, possibly by activating ethylene biosynthesis, in response to very-long-chain fatty acids (VLCFAs C20:0 to C30:0). This chain is 1-aminocyclopropane-1-carboxylate oxidase 4 (ACO4), found in Arabidopsis thaliana (Mouse-ear cress).